The chain runs to 356 residues: UDP-N-acetylglucosamine--N-acetylmuramyl-(pentapeptide) pyrophosphoryl-undecaprenol N-acetylglucosamine transferase (356 aa).

UDP-N-acetyl-alpha-D-glucosamine is bound by residues 11–13 (TAG), Asn123, Arg159, and Ser192.

The protein belongs to the glycosyltransferase 28 family. MurG subfamily.

The protein localises to the cell membrane. It carries out the reaction di-trans,octa-cis-undecaprenyl diphospho-N-acetyl-alpha-D-muramoyl-L-alanyl-D-glutamyl-meso-2,6-diaminopimeloyl-D-alanyl-D-alanine + UDP-N-acetyl-alpha-D-glucosamine = di-trans,octa-cis-undecaprenyl diphospho-[N-acetyl-alpha-D-glucosaminyl-(1-&gt;4)]-N-acetyl-alpha-D-muramoyl-L-alanyl-D-glutamyl-meso-2,6-diaminopimeloyl-D-alanyl-D-alanine + UDP + H(+). Its pathway is cell wall biogenesis; peptidoglycan biosynthesis. Its function is as follows. Cell wall formation. Catalyzes the transfer of a GlcNAc subunit on undecaprenyl-pyrophosphoryl-MurNAc-pentapeptide (lipid intermediate I) to form undecaprenyl-pyrophosphoryl-MurNAc-(pentapeptide)GlcNAc (lipid intermediate II). This is UDP-N-acetylglucosamine--N-acetylmuramyl-(pentapeptide) pyrophosphoryl-undecaprenol N-acetylglucosamine transferase from Tropheryma whipplei (strain Twist) (Whipple's bacillus).